Consider the following 670-residue polypeptide: UvrABC system protein B (670 aa).

The 158-residue stretch at 26–183 (EGLEDGLAHQ…RRLAELQYSR (158 aa)) folds into the Helicase ATP-binding domain. An ATP-binding site is contributed by 39–46 (GVTGSGKT). The Beta-hairpin signature appears at 92–115 (YYDYYQPEAYVPSSDTFIEKDASV). Residues 431–597 (QVDDLLSEIR…GLNKKISDIL (167 aa)) form the Helicase C-terminal domain. In terms of domain architecture, UVR spans 630–665 (ELKIRELESKMLTHAQNLEFEEAAALRDELQALRAQ).

Belongs to the UvrB family. In terms of assembly, forms a heterotetramer with UvrA during the search for lesions. Interacts with UvrC in an incision complex.

The protein resides in the cytoplasm. Functionally, the UvrABC repair system catalyzes the recognition and processing of DNA lesions. A damage recognition complex composed of 2 UvrA and 2 UvrB subunits scans DNA for abnormalities. Upon binding of the UvrA(2)B(2) complex to a putative damaged site, the DNA wraps around one UvrB monomer. DNA wrap is dependent on ATP binding by UvrB and probably causes local melting of the DNA helix, facilitating insertion of UvrB beta-hairpin between the DNA strands. Then UvrB probes one DNA strand for the presence of a lesion. If a lesion is found the UvrA subunits dissociate and the UvrB-DNA preincision complex is formed. This complex is subsequently bound by UvrC and the second UvrB is released. If no lesion is found, the DNA wraps around the other UvrB subunit that will check the other stand for damage. This Pectobacterium carotovorum subsp. carotovorum (strain PC1) protein is UvrABC system protein B.